The chain runs to 315 residues: Probable cell division protein WhiA (315 aa).

Residues 280-313 (SLKELGEMLDPPVGKSGINHRLRKIEKIAEELRT) constitute a DNA-binding region (H-T-H motif).

The protein belongs to the WhiA family.

In terms of biological role, involved in cell division and chromosome segregation. This Clostridium beijerinckii (strain ATCC 51743 / NCIMB 8052) (Clostridium acetobutylicum) protein is Probable cell division protein WhiA.